The sequence spans 390 residues: Putative glutamate--cysteine ligase 2 (390 aa).

This sequence belongs to the glutamate--cysteine ligase type 2 family. YbdK subfamily.

It carries out the reaction L-cysteine + L-glutamate + ATP = gamma-L-glutamyl-L-cysteine + ADP + phosphate + H(+). ATP-dependent carboxylate-amine ligase which exhibits weak glutamate--cysteine ligase activity. The chain is Putative glutamate--cysteine ligase 2 from Chloroflexus aggregans (strain MD-66 / DSM 9485).